The following is a 498-amino-acid chain: ATP synthase subunit beta, chloroplastic (498 aa).

172–179 contacts ATP; that stretch reads GGAGVGKT.

This sequence belongs to the ATPase alpha/beta chains family. As to quaternary structure, F-type ATPases have 2 components, CF(1) - the catalytic core - and CF(0) - the membrane proton channel. CF(1) has five subunits: alpha(3), beta(3), gamma(1), delta(1), epsilon(1). CF(0) has four main subunits: a(1), b(1), b'(1) and c(9-12).

The protein resides in the plastid. The protein localises to the chloroplast thylakoid membrane. It carries out the reaction ATP + H2O + 4 H(+)(in) = ADP + phosphate + 5 H(+)(out). Its function is as follows. Produces ATP from ADP in the presence of a proton gradient across the membrane. The catalytic sites are hosted primarily by the beta subunits. The sequence is that of ATP synthase subunit beta, chloroplastic from Aristolochia macrophylla (Dutchman's pipe vine).